The primary structure comprises 464 residues: Argininosuccinate lyase (464 aa).

The protein belongs to the lyase 1 family. Argininosuccinate lyase subfamily.

It localises to the cytoplasm. The catalysed reaction is 2-(N(omega)-L-arginino)succinate = fumarate + L-arginine. Its pathway is amino-acid biosynthesis; L-arginine biosynthesis; L-arginine from L-ornithine and carbamoyl phosphate: step 3/3. In Pseudomonas aeruginosa (strain LESB58), this protein is Argininosuccinate lyase.